Here is a 265-residue protein sequence, read N- to C-terminus: Hydroxyethylthiazole kinase (265 aa).

A substrate-binding site is contributed by methionine 50. Residues arginine 125 and threonine 171 each coordinate ATP. Glycine 198 contacts substrate.

It belongs to the Thz kinase family. The cofactor is Mg(2+).

The enzyme catalyses 5-(2-hydroxyethyl)-4-methylthiazole + ATP = 4-methyl-5-(2-phosphooxyethyl)-thiazole + ADP + H(+). It participates in cofactor biosynthesis; thiamine diphosphate biosynthesis; 4-methyl-5-(2-phosphoethyl)-thiazole from 5-(2-hydroxyethyl)-4-methylthiazole: step 1/1. Functionally, catalyzes the phosphorylation of the hydroxyl group of 4-methyl-5-beta-hydroxyethylthiazole (THZ). The chain is Hydroxyethylthiazole kinase from Cronobacter sakazakii (strain ATCC BAA-894) (Enterobacter sakazakii).